We begin with the raw amino-acid sequence, 444 residues long: Enolase 2 (444 aa).

The substrate site is built by histidine 165 and glutamate 174. Glutamate 217 serves as the catalytic Proton donor. Mg(2+) is bound by residues aspartate 252, glutamate 303, and aspartate 330. Positions 303 and 330 each coordinate substrate. Residue lysine 355 is the Proton acceptor of the active site. Residues 382–385 (SHRS) and lysine 406 each bind substrate.

It belongs to the enolase family. In terms of assembly, homodimer. Requires Mg(2+) as cofactor.

It localises to the cytoplasm. The enzyme catalyses (2R)-2-phosphoglycerate = phosphoenolpyruvate + H2O. It functions in the pathway carbohydrate degradation; glycolysis; pyruvate from D-glyceraldehyde 3-phosphate: step 4/5. The sequence is that of Enolase 2 (ENO2) from Toxoplasma gondii.